We begin with the raw amino-acid sequence, 935 residues long: Isoleucine--tRNA ligase (935 aa).

The short motif at 58–68 is the 'HIGH' region element; it reads PYANGSIHVGH. An L-isoleucyl-5'-AMP-binding site is contributed by E558. Residues 599–603 carry the 'KMSKS' region motif; it reads KMSKS. K602 provides a ligand contact to ATP. 4 residues coordinate Zn(2+): C897, C900, C917, and C920.

It belongs to the class-I aminoacyl-tRNA synthetase family. IleS type 1 subfamily. In terms of assembly, monomer. Requires Zn(2+) as cofactor.

The protein localises to the cytoplasm. The enzyme catalyses tRNA(Ile) + L-isoleucine + ATP = L-isoleucyl-tRNA(Ile) + AMP + diphosphate. Its function is as follows. Catalyzes the attachment of isoleucine to tRNA(Ile). As IleRS can inadvertently accommodate and process structurally similar amino acids such as valine, to avoid such errors it has two additional distinct tRNA(Ile)-dependent editing activities. One activity is designated as 'pretransfer' editing and involves the hydrolysis of activated Val-AMP. The other activity is designated 'posttransfer' editing and involves deacylation of mischarged Val-tRNA(Ile). The protein is Isoleucine--tRNA ligase of Francisella tularensis subsp. holarctica (strain OSU18).